The chain runs to 350 residues: MGQKVNPHGFRLGITSEFTSRWYADKQYKAYVGEDVKIRKMMSRGMERAGISRVDIERTQGRLRVDIHTARPGIVIGRRGAEADRIRGDLEKLTGKQVQLNILEVKNPEVDAQLVAQGVAEQLSSRVSFRRAMRKAMQTAMKGGAKGIRVQCSGRLGGAEMSRSEFYREGRVPLHTLRADIDYGFYEARTNFGRIGVKVWIYKGDIVQSRAEREAQEALQRQTRRDRPRRGPRSGSSGTTQGGTDAGRAAARSERRGRGGNAPAAETAASEAGATESTAPESTAPESTAPESTAPESTAPESTAPETTAPEAASSPAPAAESTAPATAASESAATPAAAATPGTPEKAEE.

Positions 38–106 constitute a KH type-2 domain; it reads IRKMMSRGME…QVQLNILEVK (69 aa). The segment at 211–350 is disordered; that stretch reads AEREAQEALQ…TPGTPEKAEE (140 aa). The span at 222-232 shows a compositional bias: basic residues; it reads QTRRDRPRRGP. Over residues 261 to 350 the composition is skewed to low complexity; it reads NAPAAETAAS…TPGTPEKAEE (90 aa).

Belongs to the universal ribosomal protein uS3 family. Part of the 30S ribosomal subunit. Forms a tight complex with proteins S10 and S14.

Functionally, binds the lower part of the 30S subunit head. Binds mRNA in the 70S ribosome, positioning it for translation. This chain is Small ribosomal subunit protein uS3, found in Frankia alni (strain DSM 45986 / CECT 9034 / ACN14a).